Reading from the N-terminus, the 1066-residue chain is Ribosomal protein S6 kinase delta-1 (1066 aa).

Residues 8-132 (SADLARFYTV…DFFKGGIIND (125 aa)) enclose the PX domain. A disordered region spans residues 207–228 (VASDSEQSKTEEERESRSLFPG). Basic and acidic residues predominate over residues 212-223 (EQSKTEEERESR). One can recognise an MIT domain in the interval 277-305 (VQGESSPTRREAVKRRTAEYLMRAESISS). Ser282, Ser423, Ser427, Ser449, and Ser455 each carry phosphoserine. One can recognise a Protein kinase 1 domain in the interval 344–445 (GVIDKVLLVM…PTLAKVHLQQ (102 aa)). Residues 441-509 (VHLQQPTSSP…SGSSSEEECT (69 aa)) form a disordered region. Residues 448-458 (SSPQDSSSFES) are compositionally biased toward low complexity. Over residues 474–483 (SSLTPSSQDD) the composition is skewed to polar residues. A compositionally biased stretch (low complexity) spans 492–503 (DSSPKWPDSGSS). A phosphoserine mark is found at Ser494, Ser528, Ser583, Ser605, Ser608, Ser640, Ser661, Ser664, Ser667, and Ser794. The disordered stretch occupies residues 553 to 596 (HLAADSDSPSTQLRAHELKFFPNDDPEAVSSPRTSDSLSRSKNS). The segment covering 582 to 593 (SSPRTSDSLSRS) has biased composition (low complexity). The Protein kinase 2 domain maps to 794 to 1056 (SSDPKFQGLG…VEDIKSHPFF (263 aa)). Residues 801–809 (GLGVVESAV) and Arg820 each bind ATP. Phosphoserine is present on Ser872. Residue Asp929 is the Proton acceptor of the active site.

It belongs to the protein kinase superfamily. Ser/Thr protein kinase family. S6 kinase subfamily. In terms of assembly, interacts with SPHK1 and phosphatidylinositol 3-phosphate. Interacts (via PX domain) with PRDX3. Highly expressed in testis, skeletal muscle, brain, heart, placenta, kidney and liver and weakly expressed in thymus, small intestine, lung and colon.

It localises to the cytoplasm. The protein resides in the membrane. Its subcellular location is the early endosome. The catalysed reaction is L-seryl-[protein] + ATP = O-phospho-L-seryl-[protein] + ADP + H(+). It carries out the reaction L-threonyl-[protein] + ATP = O-phospho-L-threonyl-[protein] + ADP + H(+). May be involved in transmitting sphingosine-1 phosphate (SPP)-mediated signaling into the cell. Plays a role in the recruitment of PRDX3 to early endosomes. This Homo sapiens (Human) protein is Ribosomal protein S6 kinase delta-1 (RPS6KC1).